The primary structure comprises 428 residues: 3-phosphoshikimate 1-carboxyvinyltransferase (428 aa).

Residues Lys-22, Ser-23, and Arg-27 each contribute to the 3-phosphoshikimate site. Lys-22 provides a ligand contact to phosphoenolpyruvate. Phosphoenolpyruvate is bound by residues Gly-96 and Arg-124. The 3-phosphoshikimate site is built by Ser-170, Ser-171, Gln-172, Ser-198, Asp-314, Asn-337, and Lys-341. Gln-172 lines the phosphoenolpyruvate pocket. Residue Asp-314 is the Proton acceptor of the active site. Phosphoenolpyruvate is bound by residues Arg-345, Arg-387, and Lys-412.

This sequence belongs to the EPSP synthase family. In terms of assembly, monomer.

It localises to the cytoplasm. It carries out the reaction 3-phosphoshikimate + phosphoenolpyruvate = 5-O-(1-carboxyvinyl)-3-phosphoshikimate + phosphate. Its pathway is metabolic intermediate biosynthesis; chorismate biosynthesis; chorismate from D-erythrose 4-phosphate and phosphoenolpyruvate: step 6/7. In terms of biological role, catalyzes the transfer of the enolpyruvyl moiety of phosphoenolpyruvate (PEP) to the 5-hydroxyl of shikimate-3-phosphate (S3P) to produce enolpyruvyl shikimate-3-phosphate and inorganic phosphate. The protein is 3-phosphoshikimate 1-carboxyvinyltransferase of Shewanella amazonensis (strain ATCC BAA-1098 / SB2B).